We begin with the raw amino-acid sequence, 642 residues long: MGKIIGIDLGTTNSCVAVMDGDSAKVIENSEGTRTTPSIIAFSDGEVLVGQPAKRQAVTNPKNTLYAIKRLIGRRFDEKEVQKDINLVPYNIVKSDNGDAWVEIDGKKMAPPEISARILQKMKKTVEDYLGETITEAVITVPAYFNDSQRQATKDAGRIAGLEVKRIINEPTAAALAYGIDRGAKDAKIAVYDLGGGTFDISIIETIDLDEEGQQFEVLATNGDTFLGGEDFDRRIIDYLVNEFKKEQGIDLTSDSLALQRLKEAAEKAKIELSSSQQTDINLPYITADASGPKHMNLKLTRAKLESLVADLIERSLEPCRIAMKDAGLSNSDITDVILVGGQTRMPKVQEAVKNFFGKEPRKDVNPDEAVAMGAAIQGGVLGGQVKDVLLLDVTPLSLGIETLGGVMTKLIEKNTTIPTKASQIFSTAEDNQSAVTIHILQGERQQASANKSLGRFDLSDIPPAPRGMPQIEVSFDIDANGILNVSAKDKQTGKEQSIIIKASSGLSDEEVARMVKDAEAHAEEDRKFQERIETKNSAESMINGVEKAISELGDEVTSDEKEKTEAAIKALREVMKGEDSDAIKEKTNALMEAASSIMQKAYAKMTEKQQSDDGAGTQNADHKEDDVVDADFEEVKSDKKD.

A Phosphothreonine; by autocatalysis modification is found at Thr198. Residues 602 to 642 are disordered; sequence AYAKMTEKQQSDDGAGTQNADHKEDDVVDADFEEVKSDKKD.

It belongs to the heat shock protein 70 family.

Functionally, acts as a chaperone. In Dichelobacter nodosus (strain VCS1703A), this protein is Chaperone protein DnaK.